Consider the following 418-residue polypeptide: Putative FBD-associated F-box protein At5g56560 (418 aa).

The 57-residue stretch at 4–60 (QTRLSDLPDELLLKILSALPMFKVTLATRLISRRWKGPWKLVPDVTFDDDDIPFKSF) folds into the F-box domain. The FBD domain occupies 340–390 (LWEEPAVVAKCLSEHLEIFEWRQYEGTEQERNVAGYILANATCLKMATFST).

The protein is Putative FBD-associated F-box protein At5g56560 of Arabidopsis thaliana (Mouse-ear cress).